Here is a 1485-residue protein sequence, read N- to C-terminus: Cystic fibrosis transmembrane conductance regulator (1485 aa).

Over 1–78 (MQRSPVEDAN…SLLRAMARCY (78 aa)) the chain is Cytoplasmic. Residues 79 to 99 (IKPFLLFGFLLYIGEATKTVQ) traverse the membrane as a helical segment. One can recognise an ABC transmembrane type-1 1 domain in the interval 83 to 353 (LLFGFLLYIG…CMVLRMTVTR (271 aa)). Topologically, residues 100-123 (PQLLGRIIASFDPAHEPERANGYF) are extracellular. A helical transmembrane segment spans residues 124–149 (LAFGLGLLFTARFLLLQPAMFGLHHL). The Cytoplasmic portion of the chain corresponds to 150–195 (GMQIRIALFSIIYKKTLKLSSRVLDKISTGQLVSLMSANLGKFDQS). A helical membrane pass occupies residues 196–216 (LGMAHFIWISPLQCILCTGLI). Topologically, residues 217 to 224 (WELIDVNS) are extracellular. The chain crosses the membrane as a helical span at residues 225 to 245 (FCALAAISLLGVLQAFLSHKM). The Cytoplasmic portion of the chain corresponds to 246-299 (GPYKAQKVLLTNKRLALTSEIMENLHSVKAYGWEEIMETLIKNIRQDEVKLTRK). The chain crosses the membrane as a helical span at residues 300–320 (IGSLRYFYSSAYFFSAIFVIV). Residues 321-340 (AAVVPHALSRGINLRRIFTT) lie on the Extracellular side of the membrane. A helical transmembrane segment spans residues 341–363 (LSYCMVLRMTVTRQLPGSIQMWY). The Cytoplasmic portion of the chain corresponds to 364–856 (DTMRLIWKIE…YVRYVSNNKS (493 aa)). ATP-binding positions include W402, 457–464 (GSMGSGKS), and Q492. Positions 424–645 (NGDAGLFFTN…RPDFSSLLLG (222 aa)) constitute an ABC transporter 1 domain. The tract at residues 653–826 (SAERRCSILT…GILEEENIEA (174 aa)) is disordered R region. A helical membrane pass occupies residues 857–877 (LLYVLIFILFIAAIEIAGSVA). One can recognise an ABC transmembrane type-1 2 domain in the interval 860–1163 (VLIFILFIAA…CVATSIAVDG (304 aa)). The Extracellular segment spans residues 878–924 (GIFLITDELWREEHQRSEPNMTKHSNASSSGQTYAITVTPTSSYYIL). 2 N-linked (GlcNAc...) asparagine glycosylation sites follow: N897 and N903. A discontinuously helical transmembrane segment spans residues 925-946 (YIYVATSESLLAMGFFRGLPFV). The Cytoplasmic portion of the chain corresponds to 947-996 (HTTITISKKLHQKMLHAVLSAPMSVLNTMKTGRIMNRFTKDMATIDDMLP). Residues 997-1019 (LLMFDFVQLTVVVVGCILVVSIV) traverse the membrane as a helical segment. Residues 1020 to 1021 (RP) are Extracellular-facing. A helical membrane pass occupies residues 1022–1042 (YIFLAATPLAIIFIVMRKYFL). At 1043 to 1103 (RTGQQLKQLE…TATWFLYLST (61 aa)) the chain is on the cytoplasmic side. A helical membrane pass occupies residues 1104–1124 (LRWFLFRADILFVFFFTLAAW). The Extracellular segment spans residues 1125–1138 (IAVGTNQDKPGEIG). Residues 1139–1159 (IIICLAMLILGTFQWCVATSI) form a helical membrane-spanning segment. Topologically, residues 1160–1485 (AVDGMMRSVD…AEDNIQDTRL (326 aa)) are cytoplasmic. Residues 1211–1444 (IEVRNLTVKY…TSHLKQAISP (234 aa)) enclose the ABC transporter 2 domain. ATP contacts are provided by residues Y1220 and 1245-1252 (GRTGSGKS). The disordered stretch occupies residues 1452–1485 (PRRNSSMRTPQSKLSSVTQTLQEEAEDNIQDTRL). The span at 1454–1473 (RNSSMRTPQSKLSSVTQTLQ) shows a compositional bias: polar residues. The segment covering 1474–1485 (EEAEDNIQDTRL) has biased composition (acidic residues). The PDZ-binding motif lies at 1483 to 1485 (TRL).

Belongs to the ABC transporter superfamily. ABCC family. CFTR transporter (TC 3.A.1.202) subfamily. Monomer; does not require oligomerization for channel activity. Interacts with cse1l; this interaction may down-regulate cftr activity. Phosphorylated; this activates the channel. Dephosphorylation strongly decreases ATPase activity. Phosphorylation at PKA sites activates the channel. Phosphorylation at PKC sites enhances the response to phosphorylation by PKA. In terms of tissue distribution, detected in gut epithelium (at protein level). Detected in kidney, spleen, intestine and liver. Detected in pancreatic duct epithelium at 5 dpf and throughout adult life.

It localises to the apical cell membrane. The protein localises to the early endosome membrane. It is found in the cell membrane. Its subcellular location is the recycling endosome membrane. The protein resides in the endoplasmic reticulum membrane. It carries out the reaction ATP + H2O + closed Cl(-) channel = ADP + phosphate + open Cl(-) channel.. The enzyme catalyses chloride(in) = chloride(out). The catalysed reaction is hydrogencarbonate(in) = hydrogencarbonate(out). It catalyses the reaction ATP + H2O = ADP + phosphate + H(+). Functionally, epithelial ion channel that plays an important role in the regulation of epithelial ion and water transport and fluid homeostasis. Mediates the transport of chloride ions across the cell membrane. Possesses an intrinsic ATPase activity and utilizes ATP to gate its channel; the passive flow of anions through the channel is gated by cycles of ATP binding and hydrolysis by the ATP-binding domains. The ion channel is also permeable to HCO(3)(-); selectivity depends on the extracellular chloride concentration. Exerts its function also by modulating the activity of other ion channels and transporters. Contributes to the regulation of the pH and the ion content of the epithelial fluid layer. Required for normal fluid homeostasis in the gut. Required for normal volume expansion and cell shape changes of Kupffer's vesicle during embryonic development and for normal establishment of left-right body patterning. Required for normal resistance to infection by P.aeruginosa strain PA14 and strain SMC573. This is Cystic fibrosis transmembrane conductance regulator from Danio rerio (Zebrafish).